We begin with the raw amino-acid sequence, 270 residues long: Putative protein-disulfide oxidoreductase RT0103 (270 aa).

Residues 1 to 17 (MKNIFIVLIFLFLSSCA) form the signal peptide. A Thioredoxin domain is found at 71–264 (SVLTQDLHEQ…ISRAVDRALE (194 aa)). A disulfide bond links Cys-117 and Cys-120.

It belongs to the thioredoxin family. DsbA subfamily.

It is found in the periplasm. May be required for disulfide bond formation in some proteins. The chain is Putative protein-disulfide oxidoreductase RT0103 from Rickettsia typhi (strain ATCC VR-144 / Wilmington).